We begin with the raw amino-acid sequence, 329 residues long: Tryptophan--tRNA ligase (329 aa).

Residues 9–11 and 17–18 each bind ATP; these read QPS and GN. The 'HIGH' region motif lies at 10–18; it reads PSGTITLGN. L-tryptophan is bound at residue Asp132. ATP is bound by residues 144-146, Val183, and 192-196; these read GDD and KMSKS. The short motif at 192–196 is the 'KMSKS' region element; sequence KMSKS.

This sequence belongs to the class-I aminoacyl-tRNA synthetase family. As to quaternary structure, homodimer.

Its subcellular location is the cytoplasm. The catalysed reaction is tRNA(Trp) + L-tryptophan + ATP = L-tryptophyl-tRNA(Trp) + AMP + diphosphate + H(+). Catalyzes the attachment of tryptophan to tRNA(Trp). In Bacillus anthracis, this protein is Tryptophan--tRNA ligase.